The primary structure comprises 771 residues: Rho GTPase-activating protein 26 (771 aa).

The 256-residue stretch at 7–262 folds into the BAR domain; that stretch reads EFSDCYLDSP…MKENPHEHLA (256 aa). The 105-residue stretch at 265–369 folds into the PH domain; sequence PFTMEGYLYV…WMEAMDGREP (105 aa). Residues 383–568 form the Rho-GAP domain; the sequence is AQLDNIGFSI…IIIENYEEMF (186 aa). The interval 575 to 712 is disordered; the sequence is PQTNSQLHLS…SSTSSDSSPV (138 aa). The span at 608–617 shows a compositional bias: basic and acidic residues; that stretch reads HSSEKEEKRN. Over residues 618 to 637 the composition is skewed to low complexity; that stretch reads SVNSSAESVSSSNANSSVNS. 2 stretches are compositionally biased toward polar residues: residues 638-650 and 662-671; these read TCTQRSNMNNLNA and RPNSLLNPKN. Low complexity-rich tracts occupy residues 673–683 and 691–712; these read SGLLPSSLNPS and PMVSAPSSPMPTSSTSSDSSPV. Positions 713–771 constitute an SH3 domain; sequence SVPRKAKALYACKAEHDSELSFSAGTVFENVCPSQEPGWLEGTLNGKTGLIPENYVEFL.

It localises to the cell junction. The protein resides in the focal adhesion. Its subcellular location is the cytoplasm. The protein localises to the cytoskeleton. It is found in the endosome membrane. Functionally, GTPase-activating protein for rhoa and cdc42. May be involved in the regulation of neosynthesized protein export through a Rab-endososomal dependent export route. The sequence is that of Rho GTPase-activating protein 26 (arhgap26) from Xenopus laevis (African clawed frog).